The sequence spans 435 residues: Elongation factor 1-alpha (435 aa).

A tr-type G domain is found at 4–229 (KPHLNLIVIG…DQLEIPPKPV (226 aa)). Positions 13 to 20 (GHVDHGKS) are G1. 13–20 (GHVDHGKS) contributes to the GTP binding site. Ser20 is a Mg(2+) binding site. The interval 69 to 73 (GVTIN) is G2. Positions 90–93 (DAPG) are G3. GTP contacts are provided by residues 90–94 (DAPGH) and 152–155 (NKMD). The segment at 152 to 155 (NKMD) is G4. Positions 193–195 (VAP) are G5.

Belongs to the TRAFAC class translation factor GTPase superfamily. Classic translation factor GTPase family. EF-Tu/EF-1A subfamily.

The protein localises to the cytoplasm. It catalyses the reaction GTP + H2O = GDP + phosphate + H(+). In terms of biological role, GTP hydrolase that promotes the GTP-dependent binding of aminoacyl-tRNA to the A-site of ribosomes during protein biosynthesis. The sequence is that of Elongation factor 1-alpha from Sulfurisphaera tokodaii (strain DSM 16993 / JCM 10545 / NBRC 100140 / 7) (Sulfolobus tokodaii).